We begin with the raw amino-acid sequence, 188 residues long: Elongation factor P (188 aa).

This sequence belongs to the elongation factor P family.

The protein resides in the cytoplasm. Its pathway is protein biosynthesis; polypeptide chain elongation. Functionally, involved in peptide bond synthesis. Stimulates efficient translation and peptide-bond synthesis on native or reconstituted 70S ribosomes in vitro. Probably functions indirectly by altering the affinity of the ribosome for aminoacyl-tRNA, thus increasing their reactivity as acceptors for peptidyl transferase. This chain is Elongation factor P, found in Gemmatimonas aurantiaca (strain DSM 14586 / JCM 11422 / NBRC 100505 / T-27).